Here is a 383-residue protein sequence, read N- to C-terminus: Schlafen-like protein 3 (383 aa).

Residues 118–266 form an SLFN-like fold region; it reads FDYQSNFSDV…SDKVYQISSG (149 aa). A helical membrane pass occupies residues 354–374; the sequence is LLDIQNIGWIFFGTALSFCIY.

It belongs to the Schlafen family. As to quaternary structure, component of the PUCH (precursor of 21U RNA 5'-end cleavage holoenzyme) complex; consisting of tofu-1, tofu-2 and either slfl-3 or slfl-4. Within the complex, interacts (via N-terminus) with tofu-2 (via N-terminus); the presence of tofu-1 is required for the interaction.

It localises to the mitochondrion membrane. Its function is as follows. Component of the trimeric PUCH (precursor of 21U RNA 5'-end cleavage holoenzyme) complex, that acts as an endoribonuclease processing the 5'-end of precursor Piwi-interacting RNAs (piRNAs). The PUCH complex consists of tofu-1, tofu-2 and either slfl-3 or slfl-4, where tofu-2 exhibits endoribonuclease activity. PUCH-mediated processing strictly requires a 7-methyl-G cap (m7 G-cap) and an uracil at position three (U3). PUCH also exhibits a strict bias for piRNA precursors with an A or G at position 1. Mature piRNA production is enhanced by the interaction of PUCH with the PETISCO complex, which is stabilizing piRNA precursors and allows their processing by PUCH. The protein is Schlafen-like protein 3 of Caenorhabditis elegans.